The chain runs to 433 residues: Alpha-(1,3)-fucosyltransferase 4 (433 aa).

At 1–52 (MAPARQELQHESRCRPSRTVDAWRAAVATRGRHMETPGYRRRTRCGGWGLPR) the chain is on the cytoplasmic side. The chain crosses the membrane as a helical; Signal-anchor for type II membrane protein span at residues 53–74 (SVSSLAAVGLLCTALTTFICWG). The Lumenal segment spans residues 75–433 (QLPPLPWASP…IHNLADWFQR (359 aa)). N-linked (GlcNAc...) asparagine glycans are attached at residues N117 and N218.

This sequence belongs to the glycosyltransferase 10 family. As to expression, highest expression in stomach and colon. It is also expressed in the lung, testis, uterus, small intestine and to a lesser extent in spleen, and ovary. Present in trace amounts in brain, thymus, heart, smooth muscle, kidney and bone marrow. Not found in liver, salivary gland and pancreas.

The protein resides in the golgi apparatus. It is found in the golgi stack membrane. The catalysed reaction is a beta-D-galactosyl-(1-&gt;4)-N-acetyl-beta-D-glucosaminyl derivative + GDP-beta-L-fucose = a beta-D-galactosyl-(1-&gt;4)-[alpha-L-fucosyl-(1-&gt;3)]-N-acetyl-beta-D-glucosaminyl derivative + GDP + H(+). The enzyme catalyses an N-acetyl-alpha-neuraminyl-(2-&gt;3)-beta-D-galactosyl-(1-&gt;4)-N-acetyl-beta-D-glucosaminyl derivative + GDP-beta-L-fucose = an alpha-Neu5Ac-(2-&gt;3)-beta-D-Gal-(1-&gt;4)-[alpha-L-Fuc-(1-&gt;3)]-beta-D-GlcNAc derivative + GDP + H(+). It catalyses the reaction an alpha-Neu5Ac-(2-&gt;3)-beta-D-Gal-(1-&gt;4)-beta-D-GlcNAc-(1-&gt;3)-beta-D-Gal-(1-&gt;4)-beta-D-GlcNAc derivative + GDP-beta-L-fucose = an alpha-Neu5Ac-(2-&gt;3)-beta-D-Gal-(1-&gt;4)-beta-D-GlcNAc-(1-&gt;3)-beta-D-Gal-(1-&gt;4)-[alpha-L-Fuc-(1-&gt;3)]-beta-D-GlcNAc derivative + GDP + H(+). It carries out the reaction an alpha-Neu5Ac-(2-&gt;3)-beta-D-Gal-(1-&gt;4)-beta-D-GlcNAc6S derivative + GDP-beta-L-fucose = an alpha-Neu5Ac-(2-&gt;3)-beta-D-Gal-(1-&gt;4)-[alpha-L-Fuc-(1-&gt;3)]-beta-D-GlcNAc6S derivative + GDP + H(+). The protein operates within protein modification; protein glycosylation. Functionally, catalyzes alpha(1-&gt;3) linkage of fucosyl moiety transferred from GDP-beta-L-fucose to N-acetyl glucosamine (GlcNAc) within type 2 lactosamine (LacNAc, Gal-beta(1-&gt;4)GlcNAc) glycan attached to N- or O-linked glycoproteins. Robustly fucosylates nonsialylated distal LacNAc unit of the polylactosamine chain to form Lewis X antigen (CD15), a glycan determinant known to mediate important cellular functions in development and immunity. Fucosylates with lower efficiency sialylated LacNAc acceptors to form sialyl Lewis X and 6-sulfo sialyl Lewis X determinants that serve as recognition epitopes for C-type lectins. Together with FUT7 contributes to SELE, SELL and SELP selectin ligand biosynthesis and selectin-dependent lymphocyte homing, leukocyte migration and blood leukocyte homeostasis. In a cell type specific manner, may also fucosylate the internal LacNAc unit of the polylactosamine chain to form VIM-2 antigen that serves as recognition epitope for SELE. The polypeptide is Alpha-(1,3)-fucosyltransferase 4 (Fut4) (Mus musculus (Mouse)).